A 286-amino-acid chain; its full sequence is MSQKKKASLSKIHTGMNSSSKQVLSSTSSANEKTEDDVGDEMDFSLQCDACKKLIIGLNNLDRFDCGHFYCLVCSPLQPKENHSSCATSTSPSNAFTREVSPQQIAEHTGELSNNGAERGKIRGSTRATRKGSVNKSKSGRTRRHKKVPDQRLWYFLYLSKPVVVSLPTDATYHDLMARLYTLLGVSGKTHMITLRTQKSSSEEGEGEFSGRGDPAPLEVGDSKTRLSDLKITRHKMLLLDVDDQKKDGSGEEKKEKKSAEKEKKISHENVQSLSPSSRAEDPRSS.

4 disordered regions span residues 1–38, 108–146, 196–227, and 241–286; these read MSQKKKASLSKIHTGMNSSSKQVLSSTSSANEKTEDDV, HTGELSNNGAERGKIRGSTRATRKGSVNKSKSGRTRRHK, RTQKSSSEEGEGEFSGRGDPAPLEVGDSKTRL, and DVDD…PRSS. A compositionally biased stretch (low complexity) spans 18-29; that stretch reads SSSKQVLSSTSS. The span at 243-268 shows a compositional bias: basic and acidic residues; that stretch reads DDQKKDGSGEEKKEKKSAEKEKKISH. Residues 269–278 show a composition bias toward polar residues; sequence ENVQSLSPSS.

This is an uncharacterized protein from Caenorhabditis elegans.